Consider the following 154-residue polypeptide: MSEKNQLQVEAIRHGSVIDHVPAGQGIKILKLFQLIETQERITVGFNLKSGALGKKDLIKIENTRLTEQQANQLALFAPKATVNIIEDFAVVKKHQLELPEFIAGVFHCPNSNCISHNEPVDSYFRVREVKGVVRMKCKYCEKSFTQDIVSERY.

Residues cysteine 109, cysteine 114, cysteine 138, and cysteine 141 each contribute to the Zn(2+) site.

Belongs to the PyrI family. As to quaternary structure, contains catalytic and regulatory chains. The cofactor is Zn(2+).

Functionally, involved in allosteric regulation of aspartate carbamoyltransferase. The protein is Aspartate carbamoyltransferase regulatory chain of Aeromonas hydrophila subsp. hydrophila (strain ATCC 7966 / DSM 30187 / BCRC 13018 / CCUG 14551 / JCM 1027 / KCTC 2358 / NCIMB 9240 / NCTC 8049).